A 555-amino-acid polypeptide reads, in one-letter code: GPI-anchor transamidase component PIGS (555 aa).

Residues 2–18 are Cytoplasmic-facing; that stretch reads AAAGAAATDLEVVRGKR. Residues Arg15 and Arg18 each coordinate a cardiolipin. The helical transmembrane segment at 19–39 threads the bilayer; that stretch reads SALFFAAVAILLGLPLWWKTT. Over 40–517 the chain is Lumenal; sequence ETYRAPLPYS…LHLLYFPDDQ (478 aa). Residues Asn267 and Asn370 are each glycosylated (N-linked (GlcNAc...) asparagine). Residues 518–532 form a helical membrane-spanning segment; that stretch reads KFAIYIPLFLPMAVP. Topologically, residues 533-555 are cytoplasmic; the sequence is ILLSLVKIFQETRKSWKKPEKID.

Belongs to the PIGS family. In terms of assembly, heteropentamer. Part of the GPI-anchor transamidase complex, consisting of PIGK, PIGT, PIGS, PIGU and GAA1.

Its subcellular location is the endoplasmic reticulum membrane. It functions in the pathway glycolipid biosynthesis; glycosylphosphatidylinositol-anchor biosynthesis. In terms of biological role, component of the glycosylphosphatidylinositol-anchor (GPI-anchor) transamidase (GPI-T) complex that catalyzes the formation of the linkage between a proprotein and a GPI-anchor and participates in GPI anchored protein biosynthesis. In Mus musculus (Mouse), this protein is GPI-anchor transamidase component PIGS.